A 707-amino-acid chain; its full sequence is MSSAEFSMDDFEDTFDSNATISTKDLFEGSDRLPLNQSINTTIQNLYLPNGGFAIGDQSQQQYYQAMPPLNQSDQFNLGRSNNLTPRTNQLQQLQQQQQQQQQPQQQQQQQTYGTQSPIHMSQTPSSPLSSPLPSPTPFSRQQSYNNNNSNNTSSSQNYNNNNININNNNNNNNTNNNNNNNNGNNSNGNNGNNNNNNNNNNNNNTNNNNNNNQQQQQQQQQQQQQQQQQQQQQQQGNPNLSSPQPILDTIYKLLSEQEQTLVQMIHEQSLLLNRLPPTLDENSLAPLKSLSQKQITLSGQMNTEMSALDATKKGMILEPTDLAKLFALKQDLQIQFKQLSLLHNEIQSILNPQHSAPKPNVALVLKSQPFPVVISKGKQLGENQLVVLVLTGARSNFHINGPVKATMICDSHPTNKNNPTTPLEMDSQPIYPATLTAHFPLKFLAGTRKCSVNLKFGVNIRDLDNVTTTVESDASNPFVVITNECQWEGSAGVLLKKDAFDGQLEITWAQFINTLQRHFLIATKQDPVRPKRPLSSYDLKYIQTHFFGNRSIIHQQDFDKFWVWFGKSMQTLRYQRHISTLWQEGIIYGYMGRQEVNDALQNQDPGTFIIRFSERNPGQFGIAYIGVEMPARIKHYLVQPNDTAAAKKTFPDFLSEHSQFVNLLQWTKDTNGAPRFLKLHKDTALGSFAPKRTAPVPVGGYEPLNS.

The span at 70 to 89 (LNQSDQFNLGRSNNLTPRTN) shows a compositional bias: polar residues. The tract at residues 70–246 (LNQSDQFNLG…GNPNLSSPQP (177 aa)) is disordered. The span at 90 to 111 (QLQQLQQQQQQQQQPQQQQQQQ) shows a compositional bias: low complexity. The span at 112 to 121 (TYGTQSPIHM) shows a compositional bias: polar residues. The segment covering 142–238 (QQSYNNNNSN…QQQQQQQQGN (97 aa)) has biased composition (low complexity). A coiled-coil region spans residues 242-356 (SSPQPILDTI…IQSILNPQHS (115 aa)). The DNA-binding element occupies 443 to 487 (KFLAGTRKCSVNLKFGVNIRDLDNVTTTVESDASNPFVVITNECQ). The SH2 domain maps to 583–686 (WQEGIIYGYM…FLKLHKDTAL (104 aa)). The residue at position 702 (Tyr-702) is a Phosphotyrosine.

This sequence belongs to the transcription factor STAT family. In terms of assembly, monomer, in the absence of tyrosine phosphorylation. Homodimer, or heterodimer with another family member, when tyrosine phosphorylated. In terms of processing, tyrosine phosphorylated in response to cAMP. Not tyrosine phosphorylated in growing cells. Tyrosine phosphorylation is first detected at the tight mound stage, continues throughout the slug stage and early culmination, and starts to decrease at mid-culmination. Barely detectable in fruiting bodies.

It localises to the cytoplasm. The protein resides in the nucleus. Its function is as follows. Transcription factor that binds to 5'-TTGAATTGA-3' elements in the promoter region of target genes. Functions as a repressor of the ecmB gene. Regulates the differentiation of prestalk cells during development. The chain is Signal transducer and activator of transcription A (dstA) from Dictyostelium discoideum (Social amoeba).